The sequence spans 237 residues: MTPQAFYQVLIEHGITLTDKQKKQFETYFRLLVEWNEKINLTAITDKEEVYLKHFYDSIAPILQGYIDNSPLSILDIGAGAGFPSIPMKILYPEIDITIIDSLNKRINFLNILANELELSGVHFFHGRAEDFGQDRVFRAKFDIVTARAVARMQVLAELTIPFLKVNGRLIALKAAAAEEELISAEKALKTLFSQVTVNKNYKLPNGDDRNITIVSKKKETPNKYPRKAGTPNKKPL.

S-adenosyl-L-methionine-binding positions include G78, F83, A129–E130, and R148. Positions S216–L237 are disordered.

This sequence belongs to the methyltransferase superfamily. RNA methyltransferase RsmG family.

The protein localises to the cytoplasm. In terms of biological role, specifically methylates the N7 position of a guanine in 16S rRNA. The protein is Ribosomal RNA small subunit methyltransferase G of Streptococcus agalactiae serotype Ia (strain ATCC 27591 / A909 / CDC SS700).